We begin with the raw amino-acid sequence, 100 residues long: Large ribosomal subunit protein bL28 (100 aa).

The disordered stretch occupies residues 1 to 21; the sequence is MSRVCDITGQGKSFGNKVSHS. A compositionally biased stretch (polar residues) spans 10–19; that stretch reads QGKSFGNKVS.

Belongs to the bacterial ribosomal protein bL28 family.

This is Large ribosomal subunit protein bL28 from Ehrlichia canis (strain Jake).